The sequence spans 326 residues: MTETDTWHWDQPQIHALFELPLPELLFRAQEVHRRHFNPGQVQACTLVSIKTGACAEDCTYCSQSARYDTGLEREALIDVETVREAAQRARASGATRLCMGAAWRGPKDRDLETLVAMVRAVKAEGLEACLSAGLLAEGQAERLAEAGLDYFNHNLDTSPSYYDQVVTTRSYEQRLQTLERIRDAGMRVCCGGIVGLGEARADRVEMLATLANLPVPPQSVPINRLIPIPGTPLEAAEPVDPFEIVRTIAATRLVLPRSYVRLAAGREQMSDELQALCLSAGANSLFLGERLLTTDNPDADADHRLLHRLGMTLEPRTHSCAELEP.

Positions 40–264 (GQVQACTLVS…VLPRSYVRLA (225 aa)) constitute a Radical SAM core domain. C55, C59, and C62 together coordinate [4Fe-4S] cluster. [2Fe-2S] cluster contacts are provided by C99, C130, C190, and R262.

The protein belongs to the radical SAM superfamily. Biotin synthase family. In terms of assembly, homodimer. Requires [4Fe-4S] cluster as cofactor. It depends on [2Fe-2S] cluster as a cofactor.

It carries out the reaction (4R,5S)-dethiobiotin + (sulfur carrier)-SH + 2 reduced [2Fe-2S]-[ferredoxin] + 2 S-adenosyl-L-methionine = (sulfur carrier)-H + biotin + 2 5'-deoxyadenosine + 2 L-methionine + 2 oxidized [2Fe-2S]-[ferredoxin]. Its pathway is cofactor biosynthesis; biotin biosynthesis; biotin from 7,8-diaminononanoate: step 2/2. Functionally, catalyzes the conversion of dethiobiotin (DTB) to biotin by the insertion of a sulfur atom into dethiobiotin via a radical-based mechanism. The chain is Biotin synthase from Halorhodospira halophila (strain DSM 244 / SL1) (Ectothiorhodospira halophila (strain DSM 244 / SL1)).